Reading from the N-terminus, the 316-residue chain is N-acetylmuramic acid 6-phosphate etherase (316 aa).

The SIS domain occupies isoleucine 68–lysine 231. The active-site Proton donor is glutamate 96. Glutamate 127 is an active-site residue.

This sequence belongs to the GCKR-like family. MurNAc-6-P etherase subfamily. As to quaternary structure, homodimer.

It catalyses the reaction N-acetyl-D-muramate 6-phosphate + H2O = N-acetyl-D-glucosamine 6-phosphate + (R)-lactate. It participates in amino-sugar metabolism; N-acetylmuramate degradation. Specifically catalyzes the cleavage of the D-lactyl ether substituent of MurNAc 6-phosphate, producing GlcNAc 6-phosphate and D-lactate. This chain is N-acetylmuramic acid 6-phosphate etherase, found in Prochlorococcus marinus (strain MIT 9313).